A 221-amino-acid polypeptide reads, in one-letter code: Transcriptional regulator GfcR (221 aa).

The disordered stretch occupies residues 35-59 (ASWLVERSQPTDNSQSSSANNPTEA). Residues 42-57 (SQPTDNSQSSSANNPT) show a composition bias toward polar residues.

It belongs to the purine/pyrimidine phosphoribosyltransferase family. GfcR subfamily.

Its function is as follows. DNA-binding transcriptional regulator that functions as a regulator of central sugar catabolic pathways. The protein is Transcriptional regulator GfcR of Haloquadratum walsbyi (strain DSM 16790 / HBSQ001).